The primary structure comprises 312 residues: Peroxidase (312 aa).

The N-terminal stretch at M1–G23 is a signal peptide. Q24 carries the post-translational modification Pyrrolidone carboxylic acid. 4 disulfides stabilise this stretch: C34-C107, C67-C70, C113-C307, and C192-C218. The active-site Proton acceptor is the H65. Residues D66, G69, D71, and S73 each coordinate Ca(2+). P155 contacts substrate. H185 provides a ligand contact to heme b. T186 contributes to the Ca(2+) binding site. Ca(2+)-binding residues include D231, T234, and D239. N262 carries N-linked (GlcNAc...) asparagine glycosylation.

The protein belongs to the peroxidase family. Classical plant (class III) peroxidase subfamily. Requires Ca(2+) as cofactor. Heme b serves as cofactor. As to expression, root.

It is found in the secreted. It catalyses the reaction 2 a phenolic donor + H2O2 = 2 a phenolic radical donor + 2 H2O. Removal of H(2)O(2), oxidation of toxic reductants, biosynthesis and degradation of lignin, suberization, auxin catabolism, response to environmental stresses such as wounding, pathogen attack and oxidative stress. These functions might be dependent on each isozyme/isoform in each plant tissue. Its function is as follows. Involved in defense response to powdery meldew fungus. The sequence is that of Peroxidase from Triticum aestivum (Wheat).